Consider the following 604-residue polypeptide: Elongation factor 4 (604 aa).

The tr-type G domain maps to Ser-7–Ala-189. GTP is bound by residues Asp-19–Thr-24 and Asn-136–Asp-139.

Belongs to the TRAFAC class translation factor GTPase superfamily. Classic translation factor GTPase family. LepA subfamily.

It localises to the cell inner membrane. The catalysed reaction is GTP + H2O = GDP + phosphate + H(+). Its function is as follows. Required for accurate and efficient protein synthesis under certain stress conditions. May act as a fidelity factor of the translation reaction, by catalyzing a one-codon backward translocation of tRNAs on improperly translocated ribosomes. Back-translocation proceeds from a post-translocation (POST) complex to a pre-translocation (PRE) complex, thus giving elongation factor G a second chance to translocate the tRNAs correctly. Binds to ribosomes in a GTP-dependent manner. This chain is Elongation factor 4, found in Prochlorococcus marinus (strain MIT 9313).